The primary structure comprises 621 residues: Glutamyl-tRNA(Gln) amidotransferase subunit E (621 aa).

The protein belongs to the GatB/GatE family. GatE subfamily. In terms of assembly, heterodimer of GatD and GatE.

The enzyme catalyses L-glutamyl-tRNA(Gln) + L-glutamine + ATP + H2O = L-glutaminyl-tRNA(Gln) + L-glutamate + ADP + phosphate + H(+). Functionally, allows the formation of correctly charged Gln-tRNA(Gln) through the transamidation of misacylated Glu-tRNA(Gln) in organisms which lack glutaminyl-tRNA synthetase. The reaction takes place in the presence of glutamine and ATP through an activated gamma-phospho-Glu-tRNA(Gln). The GatDE system is specific for glutamate and does not act on aspartate. The chain is Glutamyl-tRNA(Gln) amidotransferase subunit E from Methanobrevibacter smithii (strain ATCC 35061 / DSM 861 / OCM 144 / PS).